Reading from the N-terminus, the 233-residue chain is 2,3,4,5-tetrahydropyridine-2,6-dicarboxylate N-acetyltransferase (233 aa).

Belongs to the transferase hexapeptide repeat family. DapH subfamily.

It carries out the reaction (S)-2,3,4,5-tetrahydrodipicolinate + acetyl-CoA + H2O = L-2-acetamido-6-oxoheptanedioate + CoA. It functions in the pathway amino-acid biosynthesis; L-lysine biosynthesis via DAP pathway; LL-2,6-diaminopimelate from (S)-tetrahydrodipicolinate (acetylase route): step 1/3. Functionally, catalyzes the transfer of an acetyl group from acetyl-CoA to tetrahydrodipicolinate. The chain is 2,3,4,5-tetrahydropyridine-2,6-dicarboxylate N-acetyltransferase from Thermotoga sp. (strain RQ2).